We begin with the raw amino-acid sequence, 98 residues long: Integration host factor subunit alpha (98 aa).

Residues Phe-49–Asp-70 form a disordered region.

The protein belongs to the bacterial histone-like protein family. In terms of assembly, heterodimer of an alpha and a beta chain.

This protein is one of the two subunits of integration host factor, a specific DNA-binding protein that functions in genetic recombination as well as in transcriptional and translational control. This chain is Integration host factor subunit alpha, found in Yersinia pestis.